The chain runs to 535 residues: Ribonuclease Y 2 (535 aa).

Residues 1 to 21 (MLITGLIIGCLLIGLVIGYVV) traverse the membrane as a helical segment. A KH domain is found at 207 to 268 (LEHTVTVPNG…IRREVARVAL (62 aa)). The HD domain occupies 334–427 (VLLHSIEVAQ…VAAADAISGA (94 aa)).

This sequence belongs to the RNase Y family.

Its subcellular location is the cell membrane. In terms of biological role, endoribonuclease that initiates mRNA decay. The chain is Ribonuclease Y 2 from Levilactobacillus brevis (strain ATCC 367 / BCRC 12310 / CIP 105137 / JCM 1170 / LMG 11437 / NCIMB 947 / NCTC 947) (Lactobacillus brevis).